Consider the following 157-residue polypeptide: Ribosome maturation factor RimP (157 aa).

It belongs to the RimP family.

The protein resides in the cytoplasm. Its function is as follows. Required for maturation of 30S ribosomal subunits. This chain is Ribosome maturation factor RimP, found in Helicobacter hepaticus (strain ATCC 51449 / 3B1).